A 660-amino-acid chain; its full sequence is UvrABC system protein B (660 aa).

Residues 26 to 413 (AGINEGKKHQ…TPEMVEQIIR (388 aa)) form the Helicase ATP-binding domain. An ATP-binding site is contributed by 39–46 (GATGTGKT). Positions 92 to 115 (YYDYYQPEAYVPQSDTYIEKDASI) match the Beta-hairpin motif. The Helicase C-terminal domain maps to 430-592 (QIDDLIGEIN…ITPKTIEKRI (163 aa)). The UVR domain occupies 624 to 659 (EAVIERMEAEMKEAAKTLNFERAAELRDLILELKAE).

This sequence belongs to the UvrB family. In terms of assembly, forms a heterotetramer with UvrA during the search for lesions. Interacts with UvrC in an incision complex.

The protein resides in the cytoplasm. Its function is as follows. The UvrABC repair system catalyzes the recognition and processing of DNA lesions. A damage recognition complex composed of 2 UvrA and 2 UvrB subunits scans DNA for abnormalities. Upon binding of the UvrA(2)B(2) complex to a putative damaged site, the DNA wraps around one UvrB monomer. DNA wrap is dependent on ATP binding by UvrB and probably causes local melting of the DNA helix, facilitating insertion of UvrB beta-hairpin between the DNA strands. Then UvrB probes one DNA strand for the presence of a lesion. If a lesion is found the UvrA subunits dissociate and the UvrB-DNA preincision complex is formed. This complex is subsequently bound by UvrC and the second UvrB is released. If no lesion is found, the DNA wraps around the other UvrB subunit that will check the other stand for damage. The sequence is that of UvrABC system protein B from Halalkalibacterium halodurans (strain ATCC BAA-125 / DSM 18197 / FERM 7344 / JCM 9153 / C-125) (Bacillus halodurans).